Consider the following 280-residue polypeptide: Large ribosomal subunit protein uL2 (280 aa).

2 disordered regions span residues 1–59 and 223–280; these read MAIR…GGHK and GVVM…NKKR. Basic residues-rich tracts occupy residues 45 to 59 and 269 to 280; these read VHGH…GGHK and VRRRRSNKNKKR.

This sequence belongs to the universal ribosomal protein uL2 family. As to quaternary structure, part of the 50S ribosomal subunit. Forms a bridge to the 30S subunit in the 70S ribosome.

One of the primary rRNA binding proteins. Required for association of the 30S and 50S subunits to form the 70S ribosome, for tRNA binding and peptide bond formation. It has been suggested to have peptidyltransferase activity; this is somewhat controversial. Makes several contacts with the 16S rRNA in the 70S ribosome. This is Large ribosomal subunit protein uL2 from Corynebacterium jeikeium (strain K411).